Reading from the N-terminus, the 453-residue chain is Ribulose bisphosphate carboxylase large chain (453 aa).

A propeptide spanning residues 1–2 (MS) is cleaved from the precursor. N-acetylproline is present on proline 3. Lysine 14 is subject to N6,N6,N6-trimethyllysine. The substrate site is built by asparagine 123 and threonine 173. The Proton acceptor role is filled by lysine 175. A substrate-binding site is contributed by lysine 177. Positions 201, 203, and 204 each coordinate Mg(2+). Lysine 201 is modified (N6-carboxylysine). The Proton acceptor role is filled by histidine 294. Substrate is bound by residues arginine 295, histidine 327, and serine 379.

Belongs to the RuBisCO large chain family. Type I subfamily. In terms of assembly, heterohexadecamer of 8 large chains and 8 small chains; disulfide-linked. The disulfide link is formed within the large subunit homodimers. Mg(2+) serves as cofactor. The disulfide bond which can form in the large chain dimeric partners within the hexadecamer appears to be associated with oxidative stress and protein turnover.

The protein localises to the plastid. Its subcellular location is the chloroplast. The enzyme catalyses 2 (2R)-3-phosphoglycerate + 2 H(+) = D-ribulose 1,5-bisphosphate + CO2 + H2O. It catalyses the reaction D-ribulose 1,5-bisphosphate + O2 = 2-phosphoglycolate + (2R)-3-phosphoglycerate + 2 H(+). RuBisCO catalyzes two reactions: the carboxylation of D-ribulose 1,5-bisphosphate, the primary event in carbon dioxide fixation, as well as the oxidative fragmentation of the pentose substrate in the photorespiration process. Both reactions occur simultaneously and in competition at the same active site. The chain is Ribulose bisphosphate carboxylase large chain from Hydnophytum formicarum (Ant plant).